Consider the following 385-residue polypeptide: Alanine racemase (385 aa).

The active-site Proton acceptor; specific for D-alanine is lysine 40. The residue at position 40 (lysine 40) is an N6-(pyridoxal phosphate)lysine. Arginine 139 contacts substrate. Tyrosine 268 acts as the Proton acceptor; specific for L-alanine in catalysis. Position 315 (methionine 315) interacts with substrate.

It belongs to the alanine racemase family. It depends on pyridoxal 5'-phosphate as a cofactor.

The enzyme catalyses L-alanine = D-alanine. The protein operates within amino-acid biosynthesis; D-alanine biosynthesis; D-alanine from L-alanine: step 1/1. Its function is as follows. Catalyzes the interconversion of L-alanine and D-alanine. May also act on other amino acids. The protein is Alanine racemase (alr) of Anoxybacillus flavithermus (strain DSM 21510 / WK1).